The chain runs to 412 residues: Isovaleryl-CoA dehydrogenase, mitochondrial (412 aa).

Residues 1–25 (MHKLFVARSVKSALFRIKNHQKPQF) constitute a mitochondrion transit peptide. Residues 154-163 (LAMSEPNAGS) and 187-189 (WCT) each bind FAD. Residue Ser-163 participates in substrate binding. Residues 209-210 (SK), Tyr-264, and 271-274 (DLER) contribute to the substrate site. The active-site Proton acceptor is Glu-273. FAD-binding positions include Arg-299, Gln-310, and 367-371 (QCLGG). 394–395 (AG) is a binding site for substrate. Position 396-398 (396-398 (TSE)) interacts with FAD.

It belongs to the acyl-CoA dehydrogenase family. Homotetramer. FAD serves as cofactor. As to expression, expressed in flowers and tubers.

It localises to the mitochondrion. The catalysed reaction is 3-methylbutanoyl-CoA + oxidized [electron-transfer flavoprotein] + H(+) = 3-methylbut-2-enoyl-CoA + reduced [electron-transfer flavoprotein]. Its pathway is amino-acid degradation; L-leucine degradation; (S)-3-hydroxy-3-methylglutaryl-CoA from 3-isovaleryl-CoA: step 1/3. Its function is as follows. Involved in the catabolism of amino acids. Uses isovaleryl-CoA as substrate. Minor activity detected with 2-methylpalmitoyl-CoA or 2-methylbutanoyl-CoA, but no activity with short- and medium-straight chain acyl-CoA esters or with 2-methylhexanoyl-CoA. This chain is Isovaleryl-CoA dehydrogenase, mitochondrial (IVD), found in Solanum tuberosum (Potato).